A 276-amino-acid chain; its full sequence is Tryptase beta-2 (276 aa).

Positions 1–21 are cleaved as a signal peptide; sequence MLKRRLLLLWALSLLASLVYS. A propeptide spans 22–31 (activation peptide); that stretch reads APRPANQRVG. The 242-residue stretch at 32–273 folds into the Peptidase S1 domain; it reads IVGGHEASES…YLDWIHRYVP (242 aa). Cysteine 60 and cysteine 76 are disulfide-bonded. Histidine 75 (charge relay system) is an active-site residue. Tyrosine 98 carries the post-translational modification Phosphotyrosine. Catalysis depends on aspartate 122, which acts as the Charge relay system. An N-linked (GlcNAc...) asparagine glycan is attached at asparagine 133. 3 disulfides stabilise this stretch: cysteine 156–cysteine 231, cysteine 189–cysteine 212, and cysteine 221–cysteine 249. Residue serine 225 is the Charge relay system of the active site.

The protein belongs to the peptidase S1 family. Tryptase subfamily. As to quaternary structure, homotetramer. The active tetramer is converted to inactive monomers at neutral and acidic pH in the absence of heparin. Low concentrations of inactive monomers become active monomers at pH 6.0 in the presence of heparin. When the concentration of active monomers is higher, they convert to active monomers and then to active tetramers. These monomers are active and functionally distinct from the tetrameric enzyme. In contrast to the hidden active sites in the tetrameric form, the active site of the monomeric form is accessible for macromolecular proteins and inhibitors, e.g. fibrinogen which is a substrate for the monomeric but not for the tetrameric form. The monomeric form forms a complex with SERPINB6. As to expression, during embryogenesis, detected primarily in skin.

The protein localises to the secreted. The catalysed reaction is Preferential cleavage: Arg-|-Xaa, Lys-|-Xaa, but with more restricted specificity than trypsin.. Functionally, tryptase is the major neutral protease present in mast cells and is secreted upon the coupled activation-degranulation response of this cell type. Plays a role in innate immunity. In Mus musculus (Mouse), this protein is Tryptase beta-2 (Tpsb2).